Consider the following 332-residue polypeptide: 5,10-methylenetetrahydromethanopterin reductase (332 aa).

The protein belongs to the mer family.

The protein localises to the cytoplasm. It catalyses the reaction 5-methyl-5,6,7,8-tetrahydromethanopterin + oxidized coenzyme F420-(gamma-L-Glu)(n) + H(+) = 5,10-methylenetetrahydromethanopterin + reduced coenzyme F420-(gamma-L-Glu)(n). Its pathway is metabolic intermediate metabolism; lactate oxidation. Its function is as follows. Catalyzes the oxidation of methyl-H(4)MPT to methylene-H(4)MPT. In Archaeoglobus fulgidus (strain ATCC 49558 / DSM 4304 / JCM 9628 / NBRC 100126 / VC-16), this protein is 5,10-methylenetetrahydromethanopterin reductase.